The primary structure comprises 418 residues: Queuine tRNA-ribosyltransferase accessory subunit 2 (418 aa).

Zn(2+)-binding residues include cysteine 325, cysteine 327, cysteine 330, and histidine 356.

Belongs to the queuine tRNA-ribosyltransferase family. QTRT2 subfamily. Heterodimer of a catalytic subunit and an accessory subunit. Zn(2+) is required as a cofactor.

It is found in the cytoplasm. In terms of biological role, non-catalytic subunit of the queuine tRNA-ribosyltransferase (TGT) that catalyzes the base-exchange of a guanine (G) residue with queuine (Q) at position 34 (anticodon wobble position) in tRNAs with GU(N) anticodons (tRNA-Asp, -Asn, -His and -Tyr), resulting in the hypermodified nucleoside queuosine (7-(((4,5-cis-dihydroxy-2-cyclopenten-1-yl)amino)methyl)-7-deazaguanosine). In Drosophila yakuba (Fruit fly), this protein is Queuine tRNA-ribosyltransferase accessory subunit 2.